A 333-amino-acid polypeptide reads, in one-letter code: PDZ domain-containing protein GIPC1 (333 aa).

The segment covering 1–11 has biased composition (basic residues); sequence MPLGLGRRKKA. Residues 1 to 55 form a disordered region; that stretch reads MPLGLGRRKKAPPLVENEEAEPSRSGLGVGEPGPLGGSGAGESQMGLPPPPASLR. The segment covering 27-40 has biased composition (gly residues); the sequence is LGVGEPGPLGGSGA. Residue serine 68 is modified to Phosphoserine. The PDZ domain maps to 133–213; sequence EVEVFKSEDA…GRTFTLKLTE (81 aa). A disordered region spans residues 221-244; the sequence is ISQRSSGGHPGSGPQLGTGRGTLR. Phosphoserine is present on residues serine 222, serine 225, and serine 232. The span at 228–240 shows a compositional bias: gly residues; the sequence is GHPGSGPQLGTGR. Threonine 242 carries the post-translational modification Phosphothreonine. Serine 247 carries the post-translational modification Phosphoserine.

This sequence belongs to the GIPC family. Interacts with SDC4/syndecan-4 and SEMA4C/semaphorin-4C. Interacts with RGS19 (C-terminus), GLUT1 (C-terminus), ACTN1, KIF1B, MYO6 and PLEKHG5. In terms of tissue distribution, widely expressed.

It localises to the cytoplasm. Its subcellular location is the membrane. May be involved in G protein-linked signaling. In Rattus norvegicus (Rat), this protein is PDZ domain-containing protein GIPC1 (Gipc1).